Here is a 232-residue protein sequence, read N- to C-terminus: MGIGKSKMDPCHLSVPWGKSQSVDTSQSHHMSDSKQSEEISLHGDAVCSSTAEMPAEEQEGVEERPEEDTEEEVFLKFVILHAEEDTGEALRVQSLLENDFGIKPGIIFAEMPCGRQHLQNLDDAVNGSAWTILLLTENFLRDTWCKFQFYSSLMNSVNRQHKYNSVIPMRPLNNPLPRERTPFALRTINALEEESRGFPTQVERIFQESVYRIQQAIWKETRNTVQRQSVA.

The span at 1–10 shows a compositional bias: basic and acidic residues; the sequence is MGIGKSKMDP. The tract at residues 1–71 is disordered; that stretch reads MGIGKSKMDP…VEERPEEDTE (71 aa). Gly-2 carries N-myristoyl glycine lipidation. Residues 19 to 29 are compositionally biased toward polar residues; that stretch reads KSQSVDTSQSH. Residues 30–42 show a composition bias toward basic and acidic residues; the sequence is HMSDSKQSEEISL. Acidic residues predominate over residues 55 to 71; sequence PAEEQEGVEERPEEDTE. The region spanning 70–226 is the TIR domain; the sequence is TEEEVFLKFV…AIWKETRNTV (157 aa). Tyr-164 carries the phosphotyrosine modification.

Homodimer. Interacts with TLR4, TICAM1, IRF3 and IRF7 in response to LPS. Interacts with IL1R1, IL1RAP, IRAK2, IRAK3 and TRAF6. Interacts with protein kinase-inactive mutants of IRAK1 and IRAK4. Isoform 1 interacts with isoform 2; the interaction occurs in late endosomes and disrupts the interaction between isoform 1 and TICAM1. Interacts with MYD88; the interaction decreases after IL-18 stimulation in a time-dependent manner. Interacts with IL18R1 and IL18RAP. Interacts with TLR2. Interacts with RAB11FIP2. In terms of processing, myristoylated. Required for membrane association which is critical for its ability to initiate efficient signaling. Phosphorylated by PRKCE in response to LPS. Phosphorylation is essential for its function. It is depleted from the membrane upon phosphorylation. Tyrosine phosphorylation is inhibited by phosphatase PTPN4.

Its subcellular location is the cytoplasm. It localises to the golgi apparatus. The protein resides in the cell membrane. It is found in the endoplasmic reticulum. The protein localises to the early endosome. Its subcellular location is the late endosome. It localises to the cell projection. The protein resides in the phagocytic cup. Its function is as follows. Functions as a sorting adapter in different signaling pathways to facilitate downstream signaling leading to type I interferon induction. In TLR4 signaling, physically bridges TLR4 and TICAM1 and functionally transmits signal to TICAM1 in early endosomes after endocytosis of TLR4. In TLR2 signaling, physically bridges TLR2 and MYD88 and is required for the TLR2-dependent movement of MYD88 to endosomes following ligand engagement. Involved in IL-18 signaling and is proposed to function as a sorting adapter for MYD88 in IL-18 signaling during adaptive immune response. Forms a complex with RAB11FIP2 that is recruited to the phagosomes to promote the activation of the actin-regulatory GTPases RAC1 and CDC42 and subsequent phagocytosis of Gram-negative bacteria. In Bos taurus (Bovine), this protein is TIR domain-containing adapter molecule 2 (TICAM2).